Consider the following 67-residue polypeptide: Large ribosomal subunit protein bL35 (67 aa).

This sequence belongs to the bacterial ribosomal protein bL35 family.

This is Large ribosomal subunit protein bL35 from Acidovorax ebreus (strain TPSY) (Diaphorobacter sp. (strain TPSY)).